We begin with the raw amino-acid sequence, 200 residues long: Rubrerythrin (200 aa).

The Ferritin-like diiron domain maps to 12-155 (SIKGSKTEKH…ALLAHVEDGS (144 aa)). E29, E62, E103, E106, E137, H140, C167, C170, C183, and C186 together coordinate Fe(3+). One can recognise a Rubredoxin-like domain in the interval 162–200 (EIAWQCRNCGYVITSKKAPKLCPACAHPQAYFEPMKTNY).

In terms of assembly, homodimer. Possesses two rubredoxin-like centers and two non-sulfur oxo-bridged di-iron centers per dimer. The cofactor is Fe(3+).

It localises to the cytoplasm. In terms of biological role, may provide oxidative stress protection via catalytic reduction of intracellular hydrogen peroxide. This is Rubrerythrin (rbr) from Porphyromonas gingivalis (strain ATCC BAA-308 / W83).